The following is a 151-amino-acid chain: UPF0178 protein PMI1258 (151 aa).

This sequence belongs to the UPF0178 family.

The chain is UPF0178 protein PMI1258 from Proteus mirabilis (strain HI4320).